We begin with the raw amino-acid sequence, 433 residues long: Phosphomethylpyrimidine synthase 1 (433 aa).

Substrate is bound by residues Met95, Tyr124, His163, 185 to 187, 226 to 229, and Glu265; these read SRG and NAMR. A Zn(2+)-binding site is contributed by His269. Residue Tyr292 participates in substrate binding. Residue His333 participates in Zn(2+) binding. Residues Cys408, Cys411, and Cys415 each coordinate [4Fe-4S] cluster.

Belongs to the ThiC family. Requires [4Fe-4S] cluster as cofactor.

The enzyme catalyses 5-amino-1-(5-phospho-beta-D-ribosyl)imidazole + S-adenosyl-L-methionine = 4-amino-2-methyl-5-(phosphooxymethyl)pyrimidine + CO + 5'-deoxyadenosine + formate + L-methionine + 3 H(+). Its pathway is cofactor biosynthesis; thiamine diphosphate biosynthesis. Its function is as follows. Catalyzes the synthesis of the hydroxymethylpyrimidine phosphate (HMP-P) moiety of thiamine from aminoimidazole ribotide (AIR) in a radical S-adenosyl-L-methionine (SAM)-dependent reaction. The sequence is that of Phosphomethylpyrimidine synthase 1 from Methanothermobacter thermautotrophicus (strain ATCC 29096 / DSM 1053 / JCM 10044 / NBRC 100330 / Delta H) (Methanobacterium thermoautotrophicum).